The sequence spans 1240 residues: Cohesin subunit SA-3 (1240 aa).

The span at 1–25 shows a compositional bias: low complexity; sequence MPTLWSPSTQHHGSSSGSESSPLQK. Residues 1–108 form a disordered region; sequence MPTLWSPSTQ…VSSGNGKNES (108 aa). Residues 97 to 108 show a composition bias toward polar residues; sequence RIVSSGNGKNES. An SCD domain is found at 324 to 409; the sequence is FVHRYRDILP…NRFKDRMVSM (86 aa). Disordered regions lie at residues 1077-1154 and 1213-1240; these read AEAS…PELI and DKMLHSPSSPSEHGLDLLDTTELNMEDF. A compositionally biased stretch (polar residues) spans 1115-1125; it reads GPTTPTLTSTA. Residues 1126 to 1141 are compositionally biased toward basic residues; that stretch reads VKRKQSLRTVGKKQKG. At Ser1218 the chain carries Phosphoserine.

Belongs to the SCC3 family. Component of the meiosis-specific cohesin complex, which also contains the SMC1 (SMC1A or SMC1B) and SMC3 heterodimer. Such complex likely contains RAD21, or the meiosis-specific related protein REC8. Interacts with CCDC79/TERB1; recruiting cohesin to telomeres to develop structural rigidity. In terms of processing, phosphorylated. In terms of tissue distribution, testis specific.

Its subcellular location is the nucleus. The protein localises to the chromosome. It is found in the centromere. Meiosis specific component of cohesin complex. The cohesin complex is required for the cohesion of sister chromatids after DNA replication. The cohesin complex apparently forms a large proteinaceous ring within which sister chromatids can be trapped. At anaphase, the complex is cleaved and dissociates from chromatin, allowing sister chromatids to segregate. The meiosis-specific cohesin complex probably replaces mitosis specific cohesin complex when it dissociates from chromatin during prophase I. The sequence is that of Cohesin subunit SA-3 (Stag3) from Mus musculus (Mouse).